We begin with the raw amino-acid sequence, 509 residues long: Cytochrome P450 monooxygenase ARMGADRAFT_974139 (509 aa).

A helical transmembrane segment spans residues Ala4–Gly24. Residues Asn96 and Asn279 are each glycosylated (N-linked (GlcNAc...) asparagine). Cys439 is a heme binding site.

Belongs to the cytochrome P450 family. Heme serves as cofactor.

It is found in the membrane. It participates in secondary metabolite biosynthesis. Functionally, cytochrome P450 monooxygenase, part of the gene cluster that mediates the biosynthesis of melleolides, a range of antifungal and phytotoxic polyketide derivatives composed of an orsellinic acid (OA) moiety esterified to various sesquiterpene alcohols. The first step in melleolides biosynthesis is performed by the delta(6)-protoilludene synthase PRO1 which catalyzes the cyclization of farnesyl diphosphate to protoilludene. The orsellinic acid synthase armB produces OA by condensing acetyl-CoA with 3 malonyl-CoA units in a three-round chain elongation reaction folowed by a C2-C7 ring closure. ArmB further catalyzes the trans-esterification of OA to the various sesquiterpene alcohols resulting from the hydroxylation of protoilludene. The melleolides cluster also includes 5 cytochrome P450 monooxygenases, 4 NAD(+)-dependent oxidoreductases, one flavin-dependent oxidoreductase, and one O-methyltransferase. The cytochrome P450 monooxygenases may be involved in protoilludene hydroxylation to elaborate melleolides with multiple alcohol groups, such as melleolide D, which carries alcohol functionalities at C-4, C-5, C-10, and C-13. The role of the NAD(+)-dependent enzymes remains unknown. Numerous melleolides, including arnamial, show 5'-O-methylation of the aromatic moiety which may be catalyzed by the methyltransferase encoded in the cluster. The flavin-dependent oxidoreductase might represent the dehydrogenase yielding the aldehyde in position 1 of arnamial and other melleolides. Finally, several halogenase localized outside of the cluster, are able to catalyze the transfer of a single chlorine atom to the melleolide backbone, resulting in a 6'-chloromelleolide product. This is Cytochrome P450 monooxygenase ARMGADRAFT_974139 from Armillaria gallica (Bulbous honey fungus).